A 265-amino-acid polypeptide reads, in one-letter code: Sulfur carrier protein FdhD (265 aa).

Catalysis depends on Cys-107, which acts as the Cysteine persulfide intermediate.

It belongs to the FdhD family.

The protein localises to the cytoplasm. Functionally, required for formate dehydrogenase (FDH) activity. Acts as a sulfur carrier protein that transfers sulfur from IscS to the molybdenum cofactor prior to its insertion into FDH. In Staphylococcus aureus (strain bovine RF122 / ET3-1), this protein is Sulfur carrier protein FdhD.